A 396-amino-acid chain; its full sequence is DNA replication and repair protein RecF (396 aa).

30–37 (GANGSGKT) lines the ATP pocket.

This sequence belongs to the RecF family.

Its subcellular location is the cytoplasm. In terms of biological role, the RecF protein is involved in DNA metabolism; it is required for DNA replication and normal SOS inducibility. RecF binds preferentially to single-stranded, linear DNA. It also seems to bind ATP. The chain is DNA replication and repair protein RecF from Thermomicrobium roseum (strain ATCC 27502 / DSM 5159 / P-2).